The chain runs to 312 residues: Ribosomal RNA small subunit methyltransferase H (312 aa).

Residues Gly-34 to His-36, Asp-54, Leu-83, Asp-99, and Gln-106 each bind S-adenosyl-L-methionine.

The protein belongs to the methyltransferase superfamily. RsmH family.

Its subcellular location is the cytoplasm. The catalysed reaction is cytidine(1402) in 16S rRNA + S-adenosyl-L-methionine = N(4)-methylcytidine(1402) in 16S rRNA + S-adenosyl-L-homocysteine + H(+). In terms of biological role, specifically methylates the N4 position of cytidine in position 1402 (C1402) of 16S rRNA. This Rubrobacter xylanophilus (strain DSM 9941 / JCM 11954 / NBRC 16129 / PRD-1) protein is Ribosomal RNA small subunit methyltransferase H.